A 275-amino-acid polypeptide reads, in one-letter code: Phosphonoacetaldehyde hydrolase (275 aa).

D15 functions as the Nucleophile in the catalytic mechanism. Residues D15 and A17 each contribute to the Mg(2+) site. K56 functions as the Schiff-base intermediate with substrate in the catalytic mechanism. D189 serves as a coordination point for Mg(2+).

The protein belongs to the HAD-like hydrolase superfamily. PhnX family. In terms of assembly, homodimer. Mg(2+) serves as cofactor.

The catalysed reaction is phosphonoacetaldehyde + H2O = acetaldehyde + phosphate + H(+). Involved in phosphonate degradation. This is Phosphonoacetaldehyde hydrolase from Pseudomonas putida (Arthrobacter siderocapsulatus).